The following is a 221-amino-acid chain: uncharacterized protein (221 aa).

It is found in the mitochondrion. This is an uncharacterized protein from Paramecium tetraurelia.